Consider the following 521-residue polypeptide: Aspartic proteinase yapsin-1 (521 aa).

The N-terminal stretch at M1–S17 is a signal peptide. The Extracellular segment spans residues L18–F500. Residues Y67–G409 enclose the Peptidase A1 domain. D85 is an active-site residue. N136, N157, N250, N289, N295, N354, N414, N418, N460, and N484 each carry an N-linked (GlcNAc...) asparagine glycan. The helical transmembrane segment at S501–I521 threads the bilayer.

This sequence belongs to the peptidase A1 family.

It is found in the endoplasmic reticulum membrane. Its subcellular location is the secreted. The protein localises to the cell wall. Cleaves at paired basic residues. This Schizosaccharomyces pombe (strain 972 / ATCC 24843) (Fission yeast) protein is Aspartic proteinase yapsin-1 (yps1).